The following is a 556-amino-acid chain: Melanoma-associated antigen B4 (556 aa).

The segment covering 1–15 (MPRGQKSKARAREKR) has biased composition (basic residues). The segment at 1-110 (MPRGQKSKAR…RFSENPQNDL (110 aa)) is disordered. The span at 39–73 (PSCSNQDSGDAVASTSTAGFPQKSKSQGEAPTTTA) shows a compositional bias: polar residues. Positions 77–87 (GACRRSRKSTR) are enriched in basic residues. Residues 111-310 (LTRKTGMLMQ…QAFPTHYEEA (200 aa)) form the MAGE domain. Residues 315-335 (EERAQAEAVGSPGTSAKDKAE) form a disordered region. The residue at position 325 (Ser-325) is a Phosphoserine. 15 repeat units span residues 334-348 (AEAK…CKYQ), 349-363 (AESK…CKDQ), 364-378 (AESK…CKDN), 379-392 (AKSK…RKYK), 393-407 (AKSK…CKDQ), 408-421 (AESK…CKDQ), 422-436 (AESK…CKDQ), 437-451 (AESK…CKDQ), 452-466 (AESK…CKDK), 467-480 (AKSK…HKYK), 481-495 (AKSK…CKDQ), 496-510 (AESK…CKDQ), 511-525 (AESK…CKDN), 526-539 (AKSK…RKYK), and 540-554 (AKSK…GKDK). Residues 334–554 (AEAKVTLVDS…PLVDSSGKDK (221 aa)) are 15 X 15 AA approximate tandem repeats.

As to expression, expressed in testis (at protein level).

The protein localises to the cytoplasm. This Mus musculus (Mouse) protein is Melanoma-associated antigen B4.